The following is a 104-amino-acid chain: Gastrin (104 aa).

The signal sequence occupies residues 1–21 (MQRLCAYVLIHVLALAACSEA). A propeptide spanning residues 22–58 (SWKPGFQLQDASSGPGANRGKEPHELDRLGPASHHRR) is cleaved from the precursor. Positions 27-67 (FQLQDASSGPGANRGKEPHELDRLGPASHHRRQLGLQGPPH) are disordered. Over residues 40–49 (RGKEPHELDR) the composition is skewed to basic and acidic residues. Glutamine 59 is subject to Pyrrolidone carboxylic acid; in form big gastrin. Pyrrolidone carboxylic acid; in form gastrin is present on glutamine 76. Tyrosine 87 carries the sulfotyrosine; partial modification. Position 92 is a phenylalanine amide (phenylalanine 92). Serine 96 carries the post-translational modification Phosphoserine. The propeptide occupies 96 to 104 (SAEEGDQRP).

The protein belongs to the gastrin/cholecystokinin family. Sulfation enhances proteolytic processing, and blocks peptide degradation. Levels of sulfation differ between proteolytically-cleaved gastrins. Thus, gastrin-6 is almost 73% sulfated, whereas the larger gastrins are less than 50% sulfated. Sulfation levels are also tissue-specific.

Its subcellular location is the secreted. In terms of biological role, gastrin stimulates the stomach mucosa to produce and secrete hydrochloric acid and the pancreas to secrete its digestive enzymes. It also stimulates smooth muscle contraction and increases blood circulation and water secretion in the stomach and intestine. The protein is Gastrin (GAST) of Sus scrofa (Pig).